The primary structure comprises 248 residues: Tyrosine recombinase XerD-like (248 aa).

The 72-residue stretch at 1-72 (MKSYIEPFIA…TANQFLYYLY (72 aa)) folds into the Core-binding (CB) domain. Residues 85 to 248 (DTMKVMRTEK…PVTLEKYYKS (164 aa)) form the Tyr recombinase domain. Residues Lys149 and Arg213 contribute to the active site. Tyr245 serves as the catalytic O-(3'-phospho-DNA)-tyrosine intermediate.

This sequence belongs to the 'phage' integrase family. XerD-like subfamily.

It is found in the cytoplasm. Its function is as follows. Putative tyrosine recombinase. Not involved in the cutting and rejoining of the recombining DNA molecules on dif(SL) site. The chain is Tyrosine recombinase XerD-like from Streptococcus pyogenes serotype M6 (strain ATCC BAA-946 / MGAS10394).